Consider the following 494-residue polypeptide: Sugar phosphate exchanger 3 (494 aa).

The chain crosses the membrane as a helical span at residues 10 to 30 (GALLTSFSHHHLAVFLLTFFS). The N-linked (GlcNAc...) asparagine glycan is linked to Asn-58. Helical transmembrane passes span 81–101 (TLFLGTLDTVFLFSYAVGLFI), 113–133 (WVLSFGMCSSAFVVFVFGTLT), 146–166 (GLWIVNGLLQSTGWPCVVAVM), 177–197 (VVFGLWSACASVGNILGAFLA), and 209–229 (FLVTASVQFAGGIIIFFGLLV). The segment at 240-261 (GAEESSEEDSQRPLIDGAENED) is disordered. Transmembrane regions (helical) follow at residues 297-317 (LAYACLKLVNYSFFFWLPFYL), 333-353 (IWYDVGGIIGGTLLGFISDVL), 357-377 (APVLALSLFLAVWSLVGYSRS), 386-406 (LLMTITGFFIGGPSNMVSSAI), 428-448 (GIVDGTGSIGAAVGQYLVSLI), and 457-477 (VFYFFILMTSCTILFILPLIV).

Belongs to the major facilitator superfamily. Organophosphate:Pi antiporter (OPA) (TC 2.A.1.4) family. As to quaternary structure, interacts with ATRAID; the interaction is direct and both proteins are mutually dependent for their stability. Glycosylated.

It is found in the endoplasmic reticulum membrane. It localises to the lysosome membrane. Functionally, unlike the other SLC37 members, lacks glucose-6-phosphate antiporter activity. In osteoclasts, forms a transporter complex with ATRAID for nitrogen-containing-bisphophonates (N-BPs) required for releasing N-BP molecules that have trafficked to lysosomes through fluid-phase endocytosis into the cytosol. This is Sugar phosphate exchanger 3 (Slc37a3) from Mus musculus (Mouse).